Here is a 194-residue protein sequence, read N- to C-terminus: NADH-quinone oxidoreductase subunit B (194 aa).

A compositionally biased stretch (pro residues) spans 1-11 (MGVIATPPPSV). Residues 1–24 (MGVIATPPPSVQGPSSQVPSSAPI) form a disordered region. Residues 12–21 (QGPSSQVPSS) are compositionally biased toward low complexity. Positions 72, 73, 137, and 167 each coordinate [4Fe-4S] cluster.

This sequence belongs to the complex I 20 kDa subunit family. As to quaternary structure, NDH-1 is composed of 14 different subunits. Subunits NuoB, C, D, E, F, and G constitute the peripheral sector of the complex. Requires [4Fe-4S] cluster as cofactor.

It localises to the cell inner membrane. It carries out the reaction a quinone + NADH + 5 H(+)(in) = a quinol + NAD(+) + 4 H(+)(out). Functionally, NDH-1 shuttles electrons from NADH, via FMN and iron-sulfur (Fe-S) centers, to quinones in the respiratory chain. The immediate electron acceptor for the enzyme in this species is believed to be ubiquinone. Couples the redox reaction to proton translocation (for every two electrons transferred, four hydrogen ions are translocated across the cytoplasmic membrane), and thus conserves the redox energy in a proton gradient. This Rhodospirillum centenum (strain ATCC 51521 / SW) protein is NADH-quinone oxidoreductase subunit B.